A 312-amino-acid polypeptide reads, in one-letter code: Olfactory receptor 4K17 (312 aa).

At Met1 to Phe25 the chain is on the extracellular side. Asn5 carries N-linked (GlcNAc...) asparagine glycosylation. A helical membrane pass occupies residues Leu26–Val49. At Phe50–Thr57 the chain is on the cytoplasmic side. The chain crosses the membrane as a helical span at residues Pro58 to Pro79. Residues Lys80 to Gln100 are Extracellular-facing. Cysteines 97 and 189 form a disulfide. Residues Ile101–Phe120 form a helical membrane-spanning segment. At Asp121–Lys139 the chain is on the cytoplasmic side. The chain crosses the membrane as a helical span at residues Val140–Phe158. Over Gln159–Val195 the chain is Extracellular. The chain crosses the membrane as a helical span at residues Gln196 to Ser219. The Cytoplasmic portion of the chain corresponds to Leu220–Lys235. The helical transmembrane segment at Ala236–Tyr258 threads the bilayer. The Extracellular portion of the chain corresponds to Ile259 to Lys269. The N-linked (GlcNAc...) asparagine glycan is linked to Asn264. The helical transmembrane segment at Phe270 to Leu289 threads the bilayer. Topologically, residues Arg290–Thr312 are cytoplasmic.

This sequence belongs to the G-protein coupled receptor 1 family.

It localises to the cell membrane. Its function is as follows. Odorant receptor. This Homo sapiens (Human) protein is Olfactory receptor 4K17 (OR4K17).